Consider the following 177-residue polypeptide: RNA polymerase sigma-E factor (177 aa).

The short motif at 34 to 47 (DLLQTALARTYGRW) is the Polymerase core binding element. Residues 128–147 (TEETAAALGMSAGTVKSTLH) constitute a DNA-binding region (H-T-H motif).

This sequence belongs to the sigma-70 factor family. ECF subfamily.

Its subcellular location is the cytoplasm. Sigma factors are initiation factors that promote the attachment of RNA polymerase to specific initiation sites and are then released. This sigma factor is required for normal cell wall integrity; it is recruited by RNA polymerase to transcribe genes with cell wall-related functions. It is also involved in the transcription of the dagA gene coding for an extracellular agar-degrading enzyme. The sequence is that of RNA polymerase sigma-E factor (sigE) from Streptomyces coelicolor (strain ATCC BAA-471 / A3(2) / M145).